Here is a 280-residue protein sequence, read N- to C-terminus: Small ribosomal subunit protein uS15m (280 aa).

This sequence belongs to the universal ribosomal protein uS15 family. Component of the mitochondrial ribosome small subunit (28S) which comprises a 12S rRNA and about 30 distinct proteins. As to expression, expressed in anterior and posterior midgut primordia in stage 11 embryos. In stage 13 embryos, expression is high in the developing midgut and hindgut. In stage 16 embryos, expression is elevated in the midgut, hindgut, and in a small region that will give rise to pharyngeal muscles and to the stomatogastric nervous system. In larvae, expression is predominant in the gut, and head, presumably in pharyngeal muscles.

The protein localises to the mitochondrion. Functionally, essential for gut mitochondrial activity. Might be involved in tissue specific growth factor production. The protein is Small ribosomal subunit protein uS15m (bonsai) of Drosophila melanogaster (Fruit fly).